The following is a 515-amino-acid chain: Sphingolipid 10-desaturase (515 aa).

Residues 3–23 traverse the membrane as a helical segment; sequence AVWALLWALQLGTLVGCALVL. A Cytochrome b5 heme-binding domain is found at 46 to 113; that stretch reads AKPISDQKAA…DISFVFRVMH (68 aa). Heme is bound by residues His-90 and His-113. Residues 198–218 form a helical membrane-spanning segment; that stretch reads TWLLWNTAVLISIIALSVISM. The short motif at 245–249 is the Histidine box-1 element; the sequence is HDAEH. Residues 258 to 278 form a helical membrane-spanning segment; the sequence is LNDILGWIYGTVFLGVNGAWW. Residues 281–286 carry the Histidine box-2 motif; the sequence is EHREHH. 3 consecutive transmembrane segments (helical) span residues 322 to 342, 359 to 379, and 382 to 402; these read IIHF…FIVG, PWTI…LSQT, and PIPV…QLLG. A Histidine box-3 motif is present at residues 447–451; sequence HYSHH.

Belongs to the fatty acid desaturase type 1 family. Fe(2+) is required as a cofactor.

Its subcellular location is the membrane. The enzyme catalyses a (4E,8E)-4-sphinga-4,8-dienine ceramide + 2 Fe(II)-[cytochrome b5] + O2 + 2 H(+) = an N-acyl-(4E,8E,10E)-sphingatrienine + 2 Fe(III)-[cytochrome b5] + 2 H2O. It functions in the pathway lipid metabolism; sphingolipid metabolism. Functionally, fatty acid desaturase that catalyzes the introduction of the third double bond at the Delta(10) position in d18:3Delta4,8,10 triunsaturated sphingolipid long fatty acid chains. The cytochrome b5 domain probably acts as the direct electron donor to the active site of the desaturase. In Thalassiosira pseudonana (Marine diatom), this protein is Sphingolipid 10-desaturase.